The sequence spans 78 residues: Structural DNA-binding protein p10 (78 aa).

Residues 1–25 (MPTKAGTKSTANKKTTKGSSKSGSA) are compositionally biased toward low complexity. The tract at residues 1 to 41 (MPTKAGTKSTANKKTTKGSSKSGSARGHTGKTHAPPSMHSG) is disordered.

This sequence belongs to the asfivirus P10 family.

The protein resides in the virion. Functionally, may play a role in genome packaging through direct interaction with viral DNA. Binds to ssDNA and dsDNA with the same apparent affinity in vitro. The protein is Structural DNA-binding protein p10 of African swine fever virus (isolate Warthog/Namibia/Wart80/1980) (ASFV).